A 240-amino-acid polypeptide reads, in one-letter code: MTQLALVIDLNVCVGCHACVTSCKEWNTSGWAGPLVDQNPYEGSPTGTFFNRVQTFEIGTFPNTETVHFPKSCLHCEEPPCVPVCPTGASYKRPDNGVVLVDYDKCIGCKYCSWACPYGARELDAQQKVMKKCTLCIDRITDAKLSERDRKPSCVLACPANARLFGDVHDPDSEVSIAIRERGGYQLMPEWGTKPANHYLPRRKTRMHIDPEELTRVDNPWRKEDLTDYTGEETLDDVAW.

3 4Fe-4S ferredoxin-type domains span residues 4-34 (LALVIDLNVCVGCHACVTSCKEWNTSGWAGP), 64-95 (TETVHFPKSCLHCEEPPCVPVCPTGASYKRPD), and 97-126 (GVVLVDYDKCIGCKYCSWACPYGARELDAQ). [4Fe-4S] cluster is bound by residues C13, C16, C19, C23, C73, C76, C81, C85, C106, C109, C112, and C116.

Forms a heterotrimeric membrane-bound complex composed of a catalytic heterodimer (SoeAB) and a membrane anchor protein (SoeC). Requires [4Fe-4S] cluster as cofactor.

The protein localises to the cell inner membrane. Part of the SoeABC complex that catalyzes the oxidation of sulfite to sulfate. SoeB is probably the electron transfer subunit. The sequence is that of Sulfite dehydrogenase subunit B from Allochromatium vinosum (strain ATCC 17899 / DSM 180 / NBRC 103801 / NCIMB 10441 / D) (Chromatium vinosum).